We begin with the raw amino-acid sequence, 208 residues long: Large ribosomal subunit protein uL4 (208 aa).

Residues 45–89 (RQGTHAHKNRSAVSGGGKKPWRQKGTGRARQGSTRSPQWRGGGTV) are disordered.

The protein belongs to the universal ribosomal protein uL4 family. Part of the 50S ribosomal subunit.

One of the primary rRNA binding proteins, this protein initially binds near the 5'-end of the 23S rRNA. It is important during the early stages of 50S assembly. It makes multiple contacts with different domains of the 23S rRNA in the assembled 50S subunit and ribosome. Its function is as follows. Forms part of the polypeptide exit tunnel. This Lactococcus lactis subsp. lactis (strain IL1403) (Streptococcus lactis) protein is Large ribosomal subunit protein uL4.